We begin with the raw amino-acid sequence, 332 residues long: MSKIGINGFGRIGRLVLRAAIDKGANVVAVNDPFIDVNYMVYLFKFDSTHGRFKGTVAAEGGFLVVNGQKITVFSERDPANINWASAGAEYIVESTGVFTTIDKASTHLKGGAKKVIISAPSADAPMFVCGVNLDAYKPDMKVVSNASCTTNCLAPLAKVINDNFEIVEGLMTTVHATTATQKTVDGPSGKLWRDGRGAAQNIIPASTGAAKAVGKVIPALNGKLTGMAFRVPTPNVSVVDLTVRLGKGASYDEIKAKVQEAANGPLKGILGYTDEEVVSTDFLSDTHSSVFDAKAGISLNDKFVKLISWYDNEFGYSNRVIDLIKYMQSKD.

NAD(+) contacts are provided by residues 11–12 (RI), aspartate 32, and arginine 77. Residues 148–150 (SCT), threonine 179, 208–209 (TG), and arginine 231 contribute to the D-glyceraldehyde 3-phosphate site. Cysteine 149 serves as the catalytic Nucleophile. Residue tyrosine 273 is modified to Phosphotyrosine. Threonine 274 is modified (phosphothreonine). Asparagine 313 serves as a coordination point for NAD(+).

The protein belongs to the glyceraldehyde-3-phosphate dehydrogenase family. Homotetramer.

The protein resides in the cytoplasm. It carries out the reaction D-glyceraldehyde 3-phosphate + phosphate + NAD(+) = (2R)-3-phospho-glyceroyl phosphate + NADH + H(+). It functions in the pathway carbohydrate degradation; glycolysis; pyruvate from D-glyceraldehyde 3-phosphate: step 1/5. This chain is Glyceraldehyde-3-phosphate dehydrogenase 2 (Gapdh2), found in Drosophila melanogaster (Fruit fly).